Here is a 195-residue protein sequence, read N- to C-terminus: Imidazoleglycerol-phosphate dehydratase (195 aa).

This sequence belongs to the imidazoleglycerol-phosphate dehydratase family.

It is found in the cytoplasm. It carries out the reaction D-erythro-1-(imidazol-4-yl)glycerol 3-phosphate = 3-(imidazol-4-yl)-2-oxopropyl phosphate + H2O. Its pathway is amino-acid biosynthesis; L-histidine biosynthesis; L-histidine from 5-phospho-alpha-D-ribose 1-diphosphate: step 6/9. The protein is Imidazoleglycerol-phosphate dehydratase of Heliobacterium modesticaldum (strain ATCC 51547 / Ice1).